The primary structure comprises 551 residues: Cleavage and polyadenylation specificity factor subunit 6 (551 aa).

The interval 1-213 (MADGVDHIDI…RGRFPGAVPG (213 aa)) is necessary for interaction with NXF1. The 81-residue stretch at 81 to 161 (IALYIGNLTW…QNPVVTPCNK (81 aa)) folds into the RRM domain. Residues 81–161 (IALYIGNLTW…QNPVVTPCNK (81 aa)) form a necessary for interaction with NUDT21/CPSF5 region. Residues 81–161 (IALYIGNLTW…QNPVVTPCNK (81 aa)) form a necessary for nuclear paraspeckles localization region. Thr157 bears the Phosphothreonine mark. Residues 169–180 (MQSRKTTQSGQM) are compositionally biased toward polar residues. Disordered stretches follow at residues 169–411 (MQSR…PLSE) and 477–551 (LHGI…YRHR). Residues 202-206 (RGRGR) carry the GAR motif. A compositionally biased stretch (low complexity) spans 207 to 219 (FPGAVPGGDRFPG). Composition is skewed to pro residues over residues 220–265 (PAGP…PLAG), 285–366 (GQPP…PPPT), and 377–388 (GPPPTDPYGRPP). A compositionally biased stretch (basic and acidic residues) spans 389 to 404 (PYDRGDYGPPGREMDT). Phosphothreonine occurs at positions 404 and 407. Positions 404–551 (TARTPLSEAE…RDREREYRHR (148 aa)) are sufficient for nuclear speckle localization. The interval 405–551 (ARTPLSEAEF…RDREREYRHR (147 aa)) is necessary for RNA-binding. The necessary for interaction with SRSF3, SRSF7 and TRA2B/SFRS10 stretch occupies residues 481–551 (ESKSYGSGSR…RDREREYRHR (71 aa)). Residues 489-503 (SRRERSRERDHSRSR) show a composition bias toward basic and acidic residues. Residues 490–551 (RRERSRERDH…RDREREYRHR (62 aa)) are arg/Ser-rich domain. A phosphoserine mark is found at Ser494, Ser500, Ser511, Ser513, and Ser525. Residues 504–514 (EKSRRHKSRSR) show a composition bias toward basic residues. The segment at 510-551 (KSRSRDRHDDYYRERSRERERHRDRDRDRDRERDREREYRHR) is sufficient for nuclear targeting. Basic and acidic residues predominate over residues 515–551 (DRHDDYYRERSRERERHRDRDRDRDRERDREREYRHR).

This sequence belongs to the RRM CPSF6/7 family. As to quaternary structure, component of the cleavage factor Im (CFIm) complex which is a heterotetramer composed of two subunits of NUDT21/CPSF5 and two subunits of CPSF6 or CPSF7 or a heterodimer of CPSF6 and CPSF7. The cleavage factor Im (CFIm) complex associates with the CPSF and CSTF complexes to promote the assembly of the core mRNA 3'-processing machinery. Associates with the exon junction complex (EJC). Associates with the 80S ribosome particle. Interacts (via the RRM domain) with NUDT21/CPSF5; this interaction is direct and enhances binding to RNA. Interacts (via Arg/Ser-rich domain) with FIP1L1 (preferentially via unphosphorylated form and Arg/Glu/Asp-rich domain); this interaction mediates, at least in part, the interaction between the CFIm and CPSF complexes and may be inhibited by CPSF6 hyper-phosphorylation. Interacts (via N-terminus) with NXF1; this interaction is direct. Interacts with SRSF3. Interacts with SRSF7. Interacts with SNRNP70. Interacts with TRA2B/SFRS10. Interacts with UPF1. Interacts with UPF3B. Interacts with VIRMA. Interacts (via Arg/Ser-rich domain) with TNPO3; promoting nuclear import of CPSF6 independently of its phosphorylation status. Interacts with YTHDC1. In terms of processing, phosphorylated. Phosphorylated in the Arg/Ser-rich domain by SRPK1, in vitro. Post-translationally, symmetrically dimethylated on arginine residues in the GAR motif by PRMT5 in a WDR77- and CLNS1A-dependent manner. Asymmetrically dimethylated on arginine residues in the GAR motif by PRMT1.

The protein resides in the nucleus. Its subcellular location is the nucleoplasm. The protein localises to the nucleus speckle. It localises to the cytoplasm. Its function is as follows. Component of the cleavage factor Im (CFIm) complex that functions as an activator of the pre-mRNA 3'-end cleavage and polyadenylation processing required for the maturation of pre-mRNA into functional mRNAs. CFIm contributes to the recruitment of multiprotein complexes on specific sequences on the pre-mRNA 3'-end, so called cleavage and polyadenylation signals (pA signals). Most pre-mRNAs contain multiple pA signals, resulting in alternative cleavage and polyadenylation (APA) producing mRNAs with variable 3'-end formation. The CFIm complex acts as a key regulator of cleavage and polyadenylation site choice during APA through its binding to 5'-UGUA-3' elements localized in the 3'-untranslated region (UTR) for a huge number of pre-mRNAs. CPSF6 enhances NUDT21/CPSF5 binding to 5'-UGUA-3' elements localized upstream of pA signals and promotes RNA looping, and hence activates directly the mRNA 3'-processing machinery. Plays a role in mRNA export. The sequence is that of Cleavage and polyadenylation specificity factor subunit 6 from Bos taurus (Bovine).